A 107-amino-acid chain; its full sequence is Serine palmitoyltransferase-regulating protein TSC3 (107 aa).

The helical transmembrane segment at 72 to 92 (VFFLVVFTLSLFGLLKWVLSL) threads the bilayer.

Its subcellular location is the endoplasmic reticulum membrane. Functionally, stimulates the activity of serine palmitoyltransferase (SPT). The sequence is that of Serine palmitoyltransferase-regulating protein TSC3 (TSC3) from Eremothecium gossypii (strain ATCC 10895 / CBS 109.51 / FGSC 9923 / NRRL Y-1056) (Yeast).